Here is a 101-residue protein sequence, read N- to C-terminus: Small ribosomal subunit protein bS18c (101 aa).

It belongs to the bacterial ribosomal protein bS18 family. In terms of assembly, part of the 30S ribosomal subunit.

Its subcellular location is the plastid. It is found in the chloroplast. In Gossypium hirsutum (Upland cotton), this protein is Small ribosomal subunit protein bS18c.